The sequence spans 294 residues: tRNA dimethylallyltransferase (294 aa).

10–17 is an ATP binding site; the sequence is GPTAVGKT. Substrate is bound at residue 12–17; it reads TAVGKT. Residues 35-38 form an interaction with substrate tRNA region; that stretch reads DSQQ.

It belongs to the IPP transferase family. In terms of assembly, monomer. It depends on Mg(2+) as a cofactor.

It carries out the reaction adenosine(37) in tRNA + dimethylallyl diphosphate = N(6)-dimethylallyladenosine(37) in tRNA + diphosphate. Catalyzes the transfer of a dimethylallyl group onto the adenine at position 37 in tRNAs that read codons beginning with uridine, leading to the formation of N6-(dimethylallyl)adenosine (i(6)A). In Streptococcus sanguinis (strain SK36), this protein is tRNA dimethylallyltransferase.